The following is a 165-amino-acid chain: Chorismate pyruvate-lyase (165 aa).

Substrate is bound by residues Arg77, Leu115, and Glu156.

It belongs to the UbiC family. Monomer.

The protein resides in the cytoplasm. It carries out the reaction chorismate = 4-hydroxybenzoate + pyruvate. It participates in cofactor biosynthesis; ubiquinone biosynthesis. In terms of biological role, removes the pyruvyl group from chorismate, with concomitant aromatization of the ring, to provide 4-hydroxybenzoate (4HB) for the ubiquinone pathway. This is Chorismate pyruvate-lyase from Salmonella typhi.